The sequence spans 123 residues: UPF0102 protein CLK_1817 (123 aa).

This sequence belongs to the UPF0102 family.

The chain is UPF0102 protein CLK_1817 from Clostridium botulinum (strain Loch Maree / Type A3).